The sequence spans 89 residues: Small ribosomal subunit protein bS20 (89 aa).

The segment at 1–21 (MANSAQAKKRARQNVKARKHN) is disordered. Residues 7–21 (AKKRARQNVKARKHN) are compositionally biased toward basic residues.

Belongs to the bacterial ribosomal protein bS20 family.

Binds directly to 16S ribosomal RNA. The sequence is that of Small ribosomal subunit protein bS20 from Acinetobacter baylyi (strain ATCC 33305 / BD413 / ADP1).